Reading from the N-terminus, the 250-residue chain is mRNA-decapping protein g5R (250 aa).

The 147-residue stretch at 97–243 (QKFRKNWLLP…IIGPAFNFIK (147 aa)) folds into the Nudix hydrolase domain. Residues 132 to 153 (GKPKEDESDLTCAIREFEEETG) carry the Nudix box motif. Glu-138 is a Mg(2+) binding site. The Nucleophile role is filled by Glu-147. The Mg(2+) site is built by Glu-151 and Asp-173.

Belongs to the Nudix hydrolase family. DIPP subfamily. As to quaternary structure, interacts with host RPL23A. Mg(2+) is required as a cofactor. It depends on Mn(2+) as a cofactor.

It localises to the host rough endoplasmic reticulum. The catalysed reaction is diphospho-myo-inositol polyphosphate + H2O = myo-inositol polyphosphate + phosphate.. Functionally, decapping enzyme required for the removal of the 5'-end m7GpppN cap tethered to viral and host mRNAs to allow their decay in cells. May therefore accelerate viral and cellular mRNA turnover to eliminate competing host mRNAs and allow stage-specific synthesis of viral proteins. Acceleration of the turnover of cellular transcripts may even promote the shutoff of host protein synthesis. In addition to the mRNA cap, g5R also efficiently hydrolyzes diphosphoinositol polyphosphates. Down-regulation of the level of PP-InsP5 (diphosphoinositol pentakisphosphate) may play a role in viral manipulation of the cellular secretory pathway, a step necessary for the formation of virions. Binds viral and cellular poly(A) mRNAs, thereby decreasing both types of mRNAs. This African swine fever virus (isolate Tick/South Africa/Pretoriuskop Pr4/1996) (ASFV) protein is mRNA-decapping protein g5R.